The chain runs to 484 residues: Threonine synthase-like 2 (484 aa).

Lys113 is modified (N6-(pyridoxal phosphate)lysine).

This sequence belongs to the threonine synthase family. Pyridoxal 5'-phosphate is required as a cofactor.

It is found in the secreted. Functionally, acts as a catabolic phospho-lyase on both gamma- and beta-phosphorylated substrates. Degrades O-phospho-threonine (PThr) to alpha-ketobutyrate, ammonia and phosphate. In terms of biological role, potent inducer of osteoblastic production of IL6. May act to exacerbate inflammation and/or bone turnover under inflammatory conditions. This is Threonine synthase-like 2 (THNSL2) from Homo sapiens (Human).